The sequence spans 87 residues: MKNFDSLYHELAERAEKRPEGSGTVAALNSSLHTLGKKVIEEAGEVWLAAEYQSDAELAEEISQLMYWAQVIMIKRGLTPEDIYKYL.

Belongs to the PRA-PH family.

It is found in the cytoplasm. The catalysed reaction is 1-(5-phospho-beta-D-ribosyl)-ATP + H2O = 1-(5-phospho-beta-D-ribosyl)-5'-AMP + diphosphate + H(+). It participates in amino-acid biosynthesis; L-histidine biosynthesis; L-histidine from 5-phospho-alpha-D-ribose 1-diphosphate: step 2/9. The polypeptide is Phosphoribosyl-ATP pyrophosphatase (Corynebacterium diphtheriae (strain ATCC 700971 / NCTC 13129 / Biotype gravis)).